The chain runs to 408 residues: LL-diaminopimelate aminotransferase (408 aa).

Residues Tyr15 and Gly42 each coordinate substrate. Pyridoxal 5'-phosphate is bound by residues Tyr72, 108-109 (SK), Tyr132, Asn187, Tyr218, and 246-248 (SFS). Substrate-binding residues include Lys109, Tyr132, and Asn187. The residue at position 249 (Lys249) is an N6-(pyridoxal phosphate)lysine. The pyridoxal 5'-phosphate site is built by Arg257 and Asn292. The substrate site is built by Asn292 and Arg388.

Belongs to the class-I pyridoxal-phosphate-dependent aminotransferase family. LL-diaminopimelate aminotransferase subfamily. As to quaternary structure, homodimer. Requires pyridoxal 5'-phosphate as cofactor.

The enzyme catalyses (2S,6S)-2,6-diaminopimelate + 2-oxoglutarate = (S)-2,3,4,5-tetrahydrodipicolinate + L-glutamate + H2O + H(+). The protein operates within amino-acid biosynthesis; L-lysine biosynthesis via DAP pathway; LL-2,6-diaminopimelate from (S)-tetrahydrodipicolinate (aminotransferase route): step 1/1. Its function is as follows. Involved in the synthesis of meso-diaminopimelate (m-DAP or DL-DAP), required for both lysine and peptidoglycan biosynthesis. Catalyzes the direct conversion of tetrahydrodipicolinate to LL-diaminopimelate. The chain is LL-diaminopimelate aminotransferase from Leptospira interrogans serogroup Icterohaemorrhagiae serovar Lai (strain 56601).